We begin with the raw amino-acid sequence, 97 residues long: Putative septation protein SpoVG (97 aa).

This sequence belongs to the SpoVG family.

Its function is as follows. Essential for sporulation. Interferes with or is a negative regulator of the pathway leading to asymmetric septation. The protein is Putative septation protein SpoVG of Bacillus licheniformis (strain ATCC 14580 / DSM 13 / JCM 2505 / CCUG 7422 / NBRC 12200 / NCIMB 9375 / NCTC 10341 / NRRL NRS-1264 / Gibson 46).